Reading from the N-terminus, the 596-residue chain is Aspartate--tRNA(Asp/Asn) ligase (596 aa).

Glutamate 175 contributes to the L-aspartate binding site. The aspartate stretch occupies residues 199-202; that stretch reads QQYK. Arginine 221 and histidine 454 together coordinate L-aspartate. 221 to 223 lines the ATP pocket; sequence RDE. Residue glutamate 488 coordinates ATP. Arginine 495 is an L-aspartate binding site. ATP is bound at residue 540-543; the sequence is GIDR.

This sequence belongs to the class-II aminoacyl-tRNA synthetase family. Type 1 subfamily. Homodimer.

Its subcellular location is the cytoplasm. It carries out the reaction tRNA(Asx) + L-aspartate + ATP = L-aspartyl-tRNA(Asx) + AMP + diphosphate. In terms of biological role, aspartyl-tRNA synthetase with relaxed tRNA specificity since it is able to aspartylate not only its cognate tRNA(Asp) but also tRNA(Asn). Reaction proceeds in two steps: L-aspartate is first activated by ATP to form Asp-AMP and then transferred to the acceptor end of tRNA(Asp/Asn). In Mesorhizobium japonicum (strain LMG 29417 / CECT 9101 / MAFF 303099) (Mesorhizobium loti (strain MAFF 303099)), this protein is Aspartate--tRNA(Asp/Asn) ligase.